A 333-amino-acid chain; its full sequence is Cap-specific mRNA (nucleoside-2'-O-)-methyltransferase (333 aa).

Position 22 (Y22) interacts with mRNA. S-adenosyl-L-methionine-binding residues include Q39, Y66, G68, G72, D95, R97, V116, and D138. The interval 169–249 (PVASSLKWRC…NKIVRNKVVV (81 aa)) is binding to NPH-I. The segment at 169–333 (PVASSLKWRC…NSKRSVRSNK (165 aa)) is binding to Rap94. The active-site For methyltransferase activity is K175. Residues 177 to 180 (RCPF), D182, 205 to 207 (SAE), and E233 each bind mRNA. Residues 305–333 (SHEPIQRKISSKNSMSKNRNSKRSVRSNK) form a disordered region. Residues 311–322 (RKISSKNSMSKN) are compositionally biased toward low complexity. The segment covering 323–333 (RNSKRSVRSNK) has biased composition (basic residues).

It belongs to the class I-like SAM-binding methyltransferase superfamily. Poxvirus/kinetoplastid 2'-O-MTase family. In terms of assembly, interacts with poly(A) polymerase catalytic subunit OPG063. Interacts with OPG109 and OPG123; these interactions might help linking transcription to capping and polyadenylation.

It is found in the virion. It catalyses the reaction a 5'-end (N(7)-methyl 5'-triphosphoguanosine)-ribonucleoside in mRNA + S-adenosyl-L-methionine = a 5'-end (N(7)-methyl 5'-triphosphoguanosine)-(2'-O-methyl-ribonucleoside) in mRNA + S-adenosyl-L-homocysteine + H(+). Displays methyltransferase, positive regulation of the poly(A) polymerase and transcription elongation activities. Involved in the modification of both mRNA ends and in intermediate and late gene positive transcription elongation. At the mRNAs 5' end, methylates the ribose 2' OH group of the first transcribed nucleotide, thereby producing a 2'-O-methylpurine cap. At the 3' end, functions as a processivity factor which stimulates the activity of the viral poly(A) polymerase OPG063 that creates mRNA's poly(A) tail. In the presence of OPG102, OPG063 does not dissociate from the RNA allowing tail elongation to around 250 adenylates. The protein is Cap-specific mRNA (nucleoside-2'-O-)-methyltransferase (OPG102) of Vaccinia virus (strain Western Reserve) (VACV).